Reading from the N-terminus, the 446-residue chain is tRNA modification GTPase MnmE (446 aa).

3 residues coordinate (6S)-5-formyl-5,6,7,8-tetrahydrofolate: R21, E77, and K116. The TrmE-type G domain maps to 212-370; that stretch reads GFRIALIGAP…LRAALASHVA (159 aa). Residue N222 coordinates K(+). GTP contacts are provided by residues 222 to 227, 241 to 247, and 266 to 269; these read NAGKST, TDVAGTT, and DTAG. S226 provides a ligand contact to Mg(2+). K(+)-binding residues include T241, V243, and T246. T247 serves as a coordination point for Mg(2+). K446 is a binding site for (6S)-5-formyl-5,6,7,8-tetrahydrofolate.

This sequence belongs to the TRAFAC class TrmE-Era-EngA-EngB-Septin-like GTPase superfamily. TrmE GTPase family. As to quaternary structure, homodimer. Heterotetramer of two MnmE and two MnmG subunits. K(+) is required as a cofactor.

The protein localises to the cytoplasm. In terms of biological role, exhibits a very high intrinsic GTPase hydrolysis rate. Involved in the addition of a carboxymethylaminomethyl (cmnm) group at the wobble position (U34) of certain tRNAs, forming tRNA-cmnm(5)s(2)U34. The chain is tRNA modification GTPase MnmE from Caulobacter vibrioides (strain ATCC 19089 / CIP 103742 / CB 15) (Caulobacter crescentus).